The primary structure comprises 302 residues: Acetylglutamate kinase (302 aa).

Substrate-binding positions include 73-74 (GG), R95, and N200.

The protein belongs to the acetylglutamate kinase family. ArgB subfamily.

It is found in the cytoplasm. The enzyme catalyses N-acetyl-L-glutamate + ATP = N-acetyl-L-glutamyl 5-phosphate + ADP. The protein operates within amino-acid biosynthesis; L-arginine biosynthesis; N(2)-acetyl-L-ornithine from L-glutamate: step 2/4. Catalyzes the ATP-dependent phosphorylation of N-acetyl-L-glutamate. In Sphingopyxis alaskensis (strain DSM 13593 / LMG 18877 / RB2256) (Sphingomonas alaskensis), this protein is Acetylglutamate kinase.